The sequence spans 120 residues: NAD(P)H-quinone oxidoreductase subunit 3, chloroplastic (120 aa).

Transmembrane regions (helical) follow at residues 9–29 (IFWAFLIISSLIPILVFFISG), 64–84 (MFALVFVVFDVETVFLYPWAM), and 88–108 (VLGVSVFVEALIFVLILIVGL).

It belongs to the complex I subunit 3 family. As to quaternary structure, NDH is composed of at least 16 different subunits, 5 of which are encoded in the nucleus.

Its subcellular location is the plastid. It is found in the chloroplast thylakoid membrane. The enzyme catalyses a plastoquinone + NADH + (n+1) H(+)(in) = a plastoquinol + NAD(+) + n H(+)(out). It carries out the reaction a plastoquinone + NADPH + (n+1) H(+)(in) = a plastoquinol + NADP(+) + n H(+)(out). Its function is as follows. NDH shuttles electrons from NAD(P)H:plastoquinone, via FMN and iron-sulfur (Fe-S) centers, to quinones in the photosynthetic chain and possibly in a chloroplast respiratory chain. The immediate electron acceptor for the enzyme in this species is believed to be plastoquinone. Couples the redox reaction to proton translocation, and thus conserves the redox energy in a proton gradient. The protein is NAD(P)H-quinone oxidoreductase subunit 3, chloroplastic of Guizotia abyssinica (Niger).